A 430-amino-acid chain; its full sequence is MALLHSGRVLSGMAAAFHPGLAAAASARASSWWTHVEMGPPDPILGVTEAFKRDTNSKKMNLGVGAYRDDNGKPYVLPSVRKAEAQIAGKNLDKEYLPIGGLADFCKASAELALGENSEVLKSGRFVTVQTISGTGALRVGASFLQRFFKFSRDVFLPKPSWGNHTPIFRDAGMQLQGYRYYDPKTCGFDFSGALEDISKIPEQSVLLLHACAHNPTGVDPRPEQWKEMAAVVKKKNLFAFFDMAYQGFASGDGDKDAWAVRHFIEQGINVCLCQSYAKNMGLYGERVGAFTVVCKDAEEAKRVESQLKILIRPLYSNPPLNGARIAATILTSPDLRKQWLQEVKGMADRIISMRTQLVSNLKKEGSSHNWQHITDQIGMFCFTGLKPEQVERLTKEFSVYMTKDGRISVAGVTSGNVGYLAHAIHQVTK.

A mitochondrion-targeting transit peptide spans 1 to 29 (MALLHSGRVLSGMAAAFHPGLAAAASARA). Thr48 carries the phosphothreonine modification. An N6-acetyllysine modification is found at Lys59. Gly65 contributes to the substrate binding site. An N6-acetyllysine; alternate modification is found at Lys73. N6-succinyllysine; alternate is present on Lys73. Lys82 bears the N6-acetyllysine mark. Lys90 is subject to N6-acetyllysine; alternate. Lys90 carries the N6-succinyllysine; alternate modification. A 3'-nitrotyrosine; alternate modification is found at Tyr96. The residue at position 96 (Tyr96) is a Phosphotyrosine; alternate. An N6-acetyllysine; alternate mark is found at Lys107 and Lys122. N6-succinyllysine; alternate occurs at positions 107 and 122. At Ser143 the chain carries Phosphoserine. An N6-acetyllysine; alternate modification is found at Lys159. The residue at position 159 (Lys159) is an N6-succinyllysine; alternate. A substrate-binding site is contributed by Trp162. Lys185 is modified (N6-acetyllysine; alternate). At Lys185 the chain carries N6-succinyllysine; alternate. Residue Asn215 participates in substrate binding. The residue at position 227 (Lys227) is an N6-succinyllysine. Lys234 is subject to N6-acetyllysine. Lys279 and Lys296 each carry N6-acetyllysine; alternate. Lys279 is subject to N6-(pyridoxal phosphate)lysine; alternate. At Lys296 the chain carries N6-succinyllysine; alternate. Lys302 carries the post-translational modification N6-acetyllysine. Position 309 is an N6-acetyllysine; alternate (Lys309). Lys309 is subject to N6-succinyllysine; alternate. Arg313 carries the post-translational modification Asymmetric dimethylarginine. Residue Lys338 is modified to N6-acetyllysine; alternate. The residue at position 338 (Lys338) is an N6-succinyllysine; alternate. Lys345 carries the N6-acetyllysine modification. Lys363 is modified (N6-acetyllysine; alternate). Lys363 bears the N6-succinyllysine; alternate mark. N6-acetyllysine is present on residues Lys364 and Lys387. N6-acetyllysine; alternate occurs at positions 396 and 404. Residues Lys396 and Lys404 each carry the N6-succinyllysine; alternate modification. Arg407 contacts substrate.

The protein belongs to the class-I pyridoxal-phosphate-dependent aminotransferase family. In terms of assembly, homodimer. It depends on pyridoxal 5'-phosphate as a cofactor. Expressed in all tissues tested: liver, pancreas, kidney, heart, spleen, arterioles, and lymphocytes.

It localises to the mitochondrion matrix. It is found in the cell membrane. The enzyme catalyses L-aspartate + 2-oxoglutarate = oxaloacetate + L-glutamate. The catalysed reaction is L-kynurenine + 2-oxoglutarate = kynurenate + L-glutamate + H2O. Functionally, catalyzes the irreversible transamination of the L-tryptophan metabolite L-kynurenine to form kynurenic acid (KA). As a member of the malate-aspartate shuttle, it has a key role in the intracellular NAD(H) redox balance. Is important for metabolite exchange between mitochondria and cytosol, and for amino acid metabolism. Facilitates cellular uptake of long-chain free fatty acids. The chain is Aspartate aminotransferase, mitochondrial (Got2) from Rattus norvegicus (Rat).